A 550-amino-acid chain; its full sequence is Arginine--tRNA ligase (550 aa).

A 'HIGH' region motif is present at residues 125–135 (ANPTGPLHIGH).

This sequence belongs to the class-I aminoacyl-tRNA synthetase family. Monomer.

The protein resides in the cytoplasm. It carries out the reaction tRNA(Arg) + L-arginine + ATP = L-arginyl-tRNA(Arg) + AMP + diphosphate. The chain is Arginine--tRNA ligase from Lawsonia intracellularis (strain PHE/MN1-00).